We begin with the raw amino-acid sequence, 497 residues long: Lysine--tRNA ligase (497 aa).

Mg(2+) contacts are provided by Glu-409 and Glu-416.

This sequence belongs to the class-II aminoacyl-tRNA synthetase family. Homodimer. Mg(2+) serves as cofactor.

The protein localises to the cytoplasm. It catalyses the reaction tRNA(Lys) + L-lysine + ATP = L-lysyl-tRNA(Lys) + AMP + diphosphate. This Streptococcus pyogenes serotype M3 (strain ATCC BAA-595 / MGAS315) protein is Lysine--tRNA ligase.